Here is a 581-residue protein sequence, read N- to C-terminus: Arginine--tRNA ligase (581 aa).

The 'HIGH' region motif lies at 126–136 (PNLAKEMHVGH).

It belongs to the class-I aminoacyl-tRNA synthetase family. In terms of assembly, monomer.

It is found in the cytoplasm. It carries out the reaction tRNA(Arg) + L-arginine + ATP = L-arginyl-tRNA(Arg) + AMP + diphosphate. The protein is Arginine--tRNA ligase of Shewanella pealeana (strain ATCC 700345 / ANG-SQ1).